We begin with the raw amino-acid sequence, 433 residues long: Protein translocase subunit SecY (433 aa).

Transmembrane regions (helical) follow at residues 17-37 (IVFTILILIVCRFGSFIPIPG), 71-91 (IFALAIMPYITASIIIQLMSV), 117-137 (LTVLLASFQAYGVAISLESIV), 141-161 (GPVVILAGFFFRITTVITLVV), 184-204 (LIIFIGIISGVPSAIISMFEL), 212-232 (PLIAIAVCIGVVVLIAIIIFF), 268-288 (GVIPPIFASSILLFPATLANF), 310-330 (YILLYVALIMFFSFFYTAIVF), 366-386 (LTVIGGIYLSVICVIPELLMN), and 388-408 (YVISLSLGGTSFLIVVNVVLD).

The protein belongs to the SecY/SEC61-alpha family. As to quaternary structure, component of the Sec protein translocase complex. Heterotrimer consisting of SecY, SecE and SecG subunits. The heterotrimers can form oligomers, although 1 heterotrimer is thought to be able to translocate proteins. Interacts with the ribosome. Interacts with SecDF, and other proteins may be involved. Interacts with SecA.

The protein resides in the cell inner membrane. Its function is as follows. The central subunit of the protein translocation channel SecYEG. Consists of two halves formed by TMs 1-5 and 6-10. These two domains form a lateral gate at the front which open onto the bilayer between TMs 2 and 7, and are clamped together by SecE at the back. The channel is closed by both a pore ring composed of hydrophobic SecY resides and a short helix (helix 2A) on the extracellular side of the membrane which forms a plug. The plug probably moves laterally to allow the channel to open. The ring and the pore may move independently. This chain is Protein translocase subunit SecY, found in Rickettsia conorii (strain ATCC VR-613 / Malish 7).